The primary structure comprises 665 residues: MAGLSGAQIPDGEFTALVYRLIRDARYAEAVQLLGRELQRSPRSRAGLSLLGYCYYRLQEFALAAECYEQLGQLHPELEQYRLYQAQALYKACLYPEATRVAFLLLDNPAYHSRVLRLQAAIKYSEGDLPGSRSLVEQLLSGEGGEESGGDNETDGQVNLGCLLYKEGQYEAACSKFSATLQASGYQPDLSYNLALAYYSSRQYASALKHIAEIIERGIRQHPELGVGMTTEGFDVRSVGNTLVLHQTALVEAFNLKAAIEYQLRNYEVAQETLTDMPPRAEEELDPVTLHNQALMNMDARPTEGFEKLQFLLQQNPFPPETFGNLLLLYCKYEYFDLAADVLAENAHLTYKFLTPYLYDFLDALITCQTAPEEAFIKLDGLAGMLTEQLRRLTKQVQEARHNRDDEAIKKAVNEYDETMEKYIPVLMAQAKIYWNLENYPMVEKVFRKSVEFCNDHDVWKLNVAHVLFMQENKYKEAIGFYEPIVKKHYDNILNVSAIVLANLCVSYIMTSQNEEAEELMRKIEKEEEQLSYDDPNRKMYHLCIVNLVIGTLYCAKGNYEFGISRVIKSLEPYNKKLGTDTWYYAKRCFLSLLENMSKHMIVIHDSVIQECVQFLGHCELYGTNIPAVIEQPLEEERMHVGKNTVTDESRQLKALIYEIIGWNK.

TPR repeat units lie at residues 11–44 (DGEF…SPRS), 45–78 (RAGL…HPEL), 154–187 (TDGQ…SGYQ), 189–221 (DLSY…GIRQ), 393–424 (LTKQ…EKYI), 425–457 (PVLM…CNDH), and 459–492 (VWKL…HYDN). The stretch at 508-535 (YIMTSQNEEAEELMRKIEKEEEQLSYDD) forms a coiled coil. A TPR 8 repeat occupies 544 to 577 (CIVNLVIGTLYCAKGNYEFGISRVIKSLEPYNKK).

The protein belongs to the TTC30/dfy-1/fleer family.

It localises to the cell projection. Its subcellular location is the cilium. Functionally, required for polyglutamylation of axonemal tubulin. Plays a role in anterograde intraflagellar transport (IFT), the process by which cilia precursors are transported from the base of the cilium to the site of their incorporation at the tip. The protein is Intraflagellar transport protein 70A of Homo sapiens (Human).